Here is a 218-residue protein sequence, read N- to C-terminus: 3-phospho-D-glycerate guanylyltransferase (218 aa).

Belongs to the CofC family.

It catalyses the reaction (2R)-3-phosphoglycerate + GTP + H(+) = 3-[(R)-glyceryl]-diphospho-5'-guanosine + diphosphate. The protein operates within cofactor biosynthesis; coenzyme F420 biosynthesis. In terms of biological role, guanylyltransferase that catalyzes the activation of (2R)-3-phosphoglycerate (3PG) as 3-[(R)-glyceryl]-diphospho-5'-guanosine, via the condensation of 3PG with GTP. It is involved in the biosynthesis of a derivative of the hydride carrier cofactor coenzyme F420, 3PG-F420. This Phenylobacterium zucineum (strain HLK1) protein is 3-phospho-D-glycerate guanylyltransferase.